The primary structure comprises 2528 residues: Highly reducing polyketide synthase pspA (2528 aa).

The tract at residues 1–53 (MLAQDVEFVDLPPPEATAGAATTDNETSSFNSNPVPTPSEASSIGPPHQLPVP) is disordered. The span at 24-42 (DNETSSFNSNPVPTPSEAS) shows a compositional bias: polar residues. One can recognise a Ketosynthase family 3 (KS3) domain in the interval 63-483 (VEPMAICGMA…GSNAHVLLGS (421 aa)). Residues C235, H371, and H406 each act as for beta-ketoacyl synthase activity in the active site. Residues 590 to 909 (TFTGQGAQWA…HKDLLKAVGE (320 aa)) are malonyl-CoA:ACP transacylase (MAT) domain. The segment at 961 to 1089 (HDILGSRVLE…GQVCAGSDRE (129 aa)) is N-terminal hotdog fold. Residues 961-1230 (HDILGSRVLE…VSNGHVTIDI (270 aa)) are dehydratase (DH) domain. One can recognise a PKS/mFAS DH domain in the interval 961–1244 (HDILGSRVLE…MSAIGDAADA (284 aa)). H993 serves as the catalytic Proton acceptor; for dehydratase activity. Residues 1099–1244 (PRQLSRRGWY…MSAIGDAADA (146 aa)) are C-terminal hotdog fold. D1160 functions as the Proton donor; for dehydratase activity in the catalytic mechanism. A methyltransferase (CMet) domain region spans residues 1409-1587 (VFLELLAHRK…GFSGINLVSH (179 aa)). Positions 1803–2119 (GLVDTLCWKS…RGQHIGKIVI (317 aa)) are enoyl reductase (ER) (ER) domain. Residues 2143 to 2322 (RAYLFVGGLG…ASTVNIGVIQ (180 aa)) are ketoreductase (KR) domain. In terms of domain architecture, Carrier spans 2447–2525 (ETAELLAGEI…DLGVLAQKKL (79 aa)). At S2485 the chain carries O-(pantetheine 4'-phosphoryl)serine.

It carries out the reaction 9 malonyl-CoA + acetyl-CoA + S-adenosyl-L-methionine + 13 NADPH + 20 H(+) = soppiline A + S-adenosyl-L-homocysteine + 9 CO2 + 13 NADP(+) + 10 CoA + 7 H2O. It participates in secondary metabolite biosynthesis. Highly reducing polyketide synthase; part of the gene cluster that mediates the biosynthesis of the alkylresorcinols called soppilines. The biosynthesis starts with the HR-PKS pspA-catalyzed carbon chain assembly through nine chain elongation cycles, using acetyl CoA and malonyl CoA as a starter and extender units, respectively, to produce the polyketide soppiline A. In the first round, the KR, DH, and CMeT domains work to produce 2-methyl-2-butenyl thioester. In rounds 2 to 5, the KR, DH, and ER domains fully catalyze the reduction of the elongated beta-ketothioester, resulting in the insertion of eight methylene units. The unusual Z,E,Z-triene motif is likely constructed during rounds 6 to 8. Typically, the DH domain introduces a double bond at an alpha,beta-position of an elongated polyketide chain, with the dehydration of a beta-hydroxy group. The last extension cycle would be carried out with L-oriented beta-ketoreduction by the KR domain to produce beta-hydroxy carboxylic acid soppiline A. The type III PKS pspB intercepts the elongated polyketide chain at round 8 from the HR-PKS pspA, followed by a tri-keto extension and decarboxylative aldol cyclization to produce 1,3,5-trisubstituted alkylresorcinol soppiline B. Subsequently, the cytochrome P450 monooxygenase pspC catalyzes three-step oxidations at the C-4 methyl group to carboxylic acid to yield soppiline C. This chain is Highly reducing polyketide synthase pspA, found in Penicillium soppii.